A 346-amino-acid chain; its full sequence is Phosphate acyltransferase (346 aa).

The protein belongs to the PlsX family. As to quaternary structure, homodimer. Probably interacts with PlsY.

It localises to the cytoplasm. It carries out the reaction a fatty acyl-[ACP] + phosphate = an acyl phosphate + holo-[ACP]. It functions in the pathway lipid metabolism; phospholipid metabolism. In terms of biological role, catalyzes the reversible formation of acyl-phosphate (acyl-PO(4)) from acyl-[acyl-carrier-protein] (acyl-ACP). This enzyme utilizes acyl-ACP as fatty acyl donor, but not acyl-CoA. The sequence is that of Phosphate acyltransferase from Brucella abortus (strain S19).